The primary structure comprises 455 residues: MSFIPHKLEQIKKMLDTIGASSVDQLFDEIPRHLRADTLNIKDGINEIQLANLMRKRANKNHHNINYIGAGAYSHHIPAAIWDIVARGEFYTAYTPYQAEASQGGLQVIYEFQTMMAGLTGMDASNASMYDGATALAESVLMAIRSNKKAKSQKVLIAEALHPTYLRVLETITKHQGIEFDIVNLDSKNGKTDVTKLEDFANTNYAAVVIQSPNFLGQLADVDGITNWAHKHGALVIAVTNPMSLAILKSPAEWGDNGADIVCGEGQPIGVPLASGGPYFGFMTCKMAHVRQMPGRIVGKTVDLDGNEGFCLTLQAREQHIRRAKATSNICTNQGLMVTAATIYMSLLGAEGLERVASISHENTQTLATELAKINGVSIRFNSAFFNEVVIDLPVNAETFVTEMEKEAIDAGYFLGEYHSDLANSIMVCATEIHTSEDIKEYIEATKKVLARIGG.

This sequence belongs to the GcvP family. N-terminal subunit subfamily. In terms of assembly, the glycine cleavage system is composed of four proteins: P, T, L and H. In this organism, the P 'protein' is a heterodimer of two subunits.

It carries out the reaction N(6)-[(R)-lipoyl]-L-lysyl-[glycine-cleavage complex H protein] + glycine + H(+) = N(6)-[(R)-S(8)-aminomethyldihydrolipoyl]-L-lysyl-[glycine-cleavage complex H protein] + CO2. In terms of biological role, the glycine cleavage system catalyzes the degradation of glycine. The P protein binds the alpha-amino group of glycine through its pyridoxal phosphate cofactor; CO(2) is released and the remaining methylamine moiety is then transferred to the lipoamide cofactor of the H protein. In Francisella tularensis subsp. holarctica (strain FTNF002-00 / FTA), this protein is Probable glycine dehydrogenase (decarboxylating) subunit 1.